Consider the following 553-residue polypeptide: Hydroxylamine reductase (553 aa).

[2Fe-2S] cluster is bound by residues Cys-3, Cys-6, Cys-18, and Cys-25. 8 residues coordinate hybrid [4Fe-2O-2S] cluster: His-249, Glu-273, Cys-317, Cys-405, Cys-433, Cys-459, Glu-493, and Lys-495. At Cys-405 the chain carries Cysteine persulfide.

This sequence belongs to the HCP family. The cofactor is [2Fe-2S] cluster. It depends on hybrid [4Fe-2O-2S] cluster as a cofactor.

The protein localises to the cytoplasm. The enzyme catalyses A + NH4(+) + H2O = hydroxylamine + AH2 + H(+). In terms of biological role, catalyzes the reduction of hydroxylamine to form NH(3) and H(2)O. This is Hydroxylamine reductase from Actinobacillus succinogenes (strain ATCC 55618 / DSM 22257 / CCUG 43843 / 130Z).